We begin with the raw amino-acid sequence, 441 residues long: MSTEITFDQLESFSKKWRENPDKLVFQASIMKNGIKAATENPVSKATVQPVFSHEVHTDKVSNQQQSGRCWMFAALNTFRHKLNGTLGLKDFELSQNYTNFWDKLEKANYFLENIIETANEDEDSRLVSWLLDTPQQDGGQWDMLVSIIEKYGVVSKSAMPETFQSSKSADLNHLLNERLRTDAVILRKAVKEQKDTAGLKEEMLAEVYQLLVMTLGEPPKVFDFEYRNKDNEFKQDLQITPKEFYKRYVDMDLKDYIPLINAPTKDKPFNQAFTVDYLGNIVNGTPIKYLNVEMDVLKKATADQIKDGETVWFGCDVGQLSERTTGIMDTDIFLLNQAFGFKTAMTKAERLDYKHSMLTHAMVLTGVNIVNNEVNRWKVENSWGEKIGNNGYFVASDAWMDEFTFQVVVHKKYLSKELIEAFSNEPIALKPWDPMGSLAL.

Active-site residues include Cys-70, His-361, and Asn-382.

The protein belongs to the peptidase C1 family.

It carries out the reaction Inactivates bleomycin B2 (a cytotoxic glycometallopeptide) by hydrolysis of a carboxyamide bond of beta-aminoalanine, but also shows general aminopeptidase activity. The specificity varies somewhat with source, but amino acid arylamides of Met, Leu and Ala are preferred.. The chain is Aminopeptidase C (pepC) from Listeria innocua serovar 6a (strain ATCC BAA-680 / CLIP 11262).